Reading from the N-terminus, the 119-residue chain is Large ribosomal subunit protein uL14 (119 aa).

This sequence belongs to the universal ribosomal protein uL14 family. In terms of assembly, part of the 50S ribosomal subunit. Forms a cluster with proteins L3 and L19. In the 70S ribosome, L14 and L19 interact and together make contacts with the 16S rRNA in bridges B5 and B8.

In terms of biological role, binds to 23S rRNA. Forms part of two intersubunit bridges in the 70S ribosome. In Wolbachia pipientis wMel, this protein is Large ribosomal subunit protein uL14.